The sequence spans 181 residues: Cyclic AMP-dependent transcription factor ATF-3 (181 aa).

Residues 76 to 97 (VTKAEVAPEEDERKKRRRERNK) form a disordered region. Lys-78 is covalently cross-linked (Glycyl lysine isopeptide (Lys-Gly) (interchain with G-Cter in SUMO2)). Residues 86-149 (DERKKRRRER…QHLIYMLNLH (64 aa)) enclose the bZIP domain. The segment at 88–110 (RKKRRRERNKIAAAKCRNKKKEK) is basic motif. Residues 114–142 (LQKESEKLESVNAELKAQIEELKNEKQHL) are leucine-zipper. Thr-162 carries the post-translational modification Phosphothreonine. A Glycyl lysine isopeptide (Lys-Gly) (interchain with G-Cter in SUMO2) cross-link involves residue Lys-175.

Belongs to the bZIP family. ATF subfamily. In terms of assembly, binds DNA as a homodimer or a heterodimer. Interacts with KAT5; promoting KAT5 autoacetylation and KAT5 deubiquitination by USP7.

The protein resides in the nucleus. This protein binds the cAMP response element (CRE) (consensus: 5'-GTGACGT[AC][AG]-3'), a sequence present in many viral and cellular promoters. Represses transcription from promoters with ATF sites. It may repress transcription by stabilizing the binding of inhibitory cofactors at the promoter. This Bos taurus (Bovine) protein is Cyclic AMP-dependent transcription factor ATF-3 (ATF3).